We begin with the raw amino-acid sequence, 581 residues long: Bestrophin-1 (581 aa).

Over 1 to 31 (MTVTYSSQVANARLGSFSRLLLCWRGSIYKL) the chain is Cytoplasmic. Residue Ala-10 participates in Ca(2+) binding. Residues 32-51 (LYGEFLIFLLCYYIIRFIYR) traverse the membrane as a helical segment. At 52-60 (MALTDEQQV) the chain is on the extracellular side. Residues 61 to 82 (IFEKLTLYCDSYIQLIPISFVL) traverse the membrane as a helical segment. Residues 83–237 (GFYVTLVVTR…DWISVPLVYT (155 aa)) lie on the Cytoplasmic side of the membrane. The helical transmembrane segment at 238–255 (QVVTVAVYSFFLACLVGR) threads the bilayer. Over 256–274 (QFLNPAKAYPGHEMDLVVP) the chain is Extracellular. Residues 275-288 (LFTFLQFFFYAGWL) form a helical membrane-spanning segment. Residues 289 to 581 (KVAEQLINPF…ALENRDEAHS (293 aa)) are Cytoplasmic-facing. Positions 293, 296, 301, and 304 each coordinate Ca(2+). Residues 416 to 440 (EGHFHEGHPKNLRGARLDSSDQEDS) are disordered.

This sequence belongs to the anion channel-forming bestrophin (TC 1.A.46) family. Calcium-sensitive chloride channel subfamily. As to quaternary structure, interacts with YWHAG; this interaction promotes the ligand-gated L-glutamate channel activity leading to the positive regulation of NMDA glutamate receptor activity through the L-glutamate secretion. Post-translationally, phosphorylated (in vitro). Dephosphorylated (in vitro) by PP2A.

It localises to the cell membrane. Its subcellular location is the basolateral cell membrane. It catalyses the reaction chloride(in) = chloride(out). The catalysed reaction is hydrogencarbonate(in) = hydrogencarbonate(out). It carries out the reaction 4-aminobutanoate(in) = 4-aminobutanoate(out). The enzyme catalyses L-glutamate(out) = L-glutamate(in). Functionally, ligand-gated anion channel that allows the movement of anions across cell membranes when activated by calcium (Ca2+). Allows the movement of chloride and hydrogencarbonate. Found in a partially open conformation leading to significantly smaller chloride movement. Upon F2R/PAR-1 activation, the sequestered calcium is released into the cytosol of astrocytes, leading to the (Ca2+)-dependent release of L-glutamate into the synaptic cleft that targets the neuronal postsynaptic GRIN2A/NMDAR receptor resulting in the synaptic plasticity regulation. Upon activation of the norepinephrine-alpha-1 adrenergic receptor signaling pathway, transports as well D-serine than L-glutamate in a (Ca2+)-dependent manner, leading to activation of adjacent NMDAR receptors and therefore regulates the heterosynaptic long-term depression and metaplasticity during initial memory acquisition. Releases the 4-aminobutanoate neurotransmitter in a (Ca2+)-dependent manner, and participates in its tonic release from cerebellar glial cells. The sequence is that of Bestrophin-1 from Sus scrofa (Pig).